Here is a 1115-residue protein sequence, read N- to C-terminus: DNA-directed RNA polymerase subunit beta (1115 aa).

The segment at 1084-1115 (HEAGEGEDDEYFEEDEEAVDDEPMTFDDDDME) is disordered. Over residues 1088–1115 (EGEDDEYFEEDEEAVDDEPMTFDDDDME) the composition is skewed to acidic residues.

Belongs to the RNA polymerase beta chain family. The RNAP catalytic core consists of 2 alpha, 1 beta, 1 beta' and 1 omega subunit. When a sigma factor is associated with the core the holoenzyme is formed, which can initiate transcription.

The catalysed reaction is RNA(n) + a ribonucleoside 5'-triphosphate = RNA(n+1) + diphosphate. Functionally, DNA-dependent RNA polymerase catalyzes the transcription of DNA into RNA using the four ribonucleoside triphosphates as substrates. The polypeptide is DNA-directed RNA polymerase subunit beta (Desulfitobacterium hafniense (strain DSM 10664 / DCB-2)).